The primary structure comprises 281 residues: 18S rRNA (guanine-N(7))-methyltransferase (281 aa).

The tract at residues 256–281 is disordered; the sequence is KARRRRQGKEVCPDTQYTGRKRKPRF.

Belongs to the class I-like SAM-binding methyltransferase superfamily. BUD23/WBSCR22 family. Heterodimer with TRMT112; this heterodimerization is necessary for the metabolic stability and activity of the catalytic subunit BUD23. Interacts with GRIP1. May be ubiquitinated and targeted to degradation in response to pro-inflammatory cytokine signaling.

It is found in the nucleus. The protein resides in the nucleoplasm. The protein localises to the cytoplasm. It localises to the perinuclear region. The enzyme catalyses a guanosine in 18S rRNA + S-adenosyl-L-methionine = an N(7)-methylguanosine in 18S rRNA + S-adenosyl-L-homocysteine. Its function is as follows. S-adenosyl-L-methionine-dependent methyltransferase that specifically methylates the N(7) position of a guanine in 18S rRNA. Requires the methyltransferase adapter protein TRM112 for full rRNA methyltransferase activity. Involved in the pre-rRNA processing steps leading to small-subunit rRNA production independently of its RNA-modifying catalytic activity. Important for biogenesis end export of the 40S ribosomal subunit independent on its methyltransferase activity. Locus-specific steroid receptor coactivator. Potentiates transactivation by glucocorticoid (NR3C1), mineralocorticoid (NR3C2), androgen (AR) and progesterone (PGR) receptors. Required for the maintenance of open chromatin at the TSC22D3/GILZ locus to facilitate NR3C1 loading on the response elements. Required for maintenance of dimethylation on histone H3 'Lys-79' (H3K79me2), although direct histone methyltransferase activity is not observed in vitro. The polypeptide is 18S rRNA (guanine-N(7))-methyltransferase (Bos taurus (Bovine)).